The sequence spans 408 residues: LL-diaminopimelate aminotransferase (408 aa).

Residues tyrosine 15 and glycine 42 each coordinate substrate. Pyridoxal 5'-phosphate contacts are provided by residues tyrosine 72, 108–109 (SK), tyrosine 132, asparagine 187, tyrosine 218, and 246–248 (SFS). Residues lysine 109, tyrosine 132, and asparagine 187 each coordinate substrate. Residue lysine 249 is modified to N6-(pyridoxal phosphate)lysine. 2 residues coordinate pyridoxal 5'-phosphate: arginine 257 and asparagine 291. Residues asparagine 291 and arginine 387 each coordinate substrate.

Belongs to the class-I pyridoxal-phosphate-dependent aminotransferase family. LL-diaminopimelate aminotransferase subfamily. As to quaternary structure, homodimer. Pyridoxal 5'-phosphate serves as cofactor.

The catalysed reaction is (2S,6S)-2,6-diaminopimelate + 2-oxoglutarate = (S)-2,3,4,5-tetrahydrodipicolinate + L-glutamate + H2O + H(+). The protein operates within amino-acid biosynthesis; L-lysine biosynthesis via DAP pathway; LL-2,6-diaminopimelate from (S)-tetrahydrodipicolinate (aminotransferase route): step 1/1. Involved in the synthesis of meso-diaminopimelate (m-DAP or DL-DAP), required for both lysine and peptidoglycan biosynthesis. Catalyzes the direct conversion of tetrahydrodipicolinate to LL-diaminopimelate. This Prochlorococcus marinus (strain NATL2A) protein is LL-diaminopimelate aminotransferase.